Consider the following 391-residue polypeptide: ATP-sensitive inward rectifier potassium channel 1 (391 aa).

Over 1–77 (MGASERSVFR…IWTTVLDLKW (77 aa)) the chain is Cytoplasmic. Position 44 is a phosphoserine; by SGK1 (S44). A helical transmembrane segment spans residues 78–102 (RYKMTVFITAFLGSWFLFGLLWYVV). Residues 103–127 (AYVHKDLPEFYPPDNRTPCVENING) are Extracellular-facing. N117 carries an N-linked (GlcNAc...) asparagine glycan. Residues 128-139 (MTSAFLFSLETQ) constitute an intramembrane region (helical; Pore-forming). Residues 140-146 (VTIGYGF) constitute an intramembrane region (pore-forming). The Selectivity filter signature appears at 141-146 (TIGYGF). At 147 to 155 (RFVTEQCAT) the chain is on the extracellular side. A helical membrane pass occupies residues 156-177 (AIFLLIFQSILGVIINSFMCGA). Residues 178-391 (ILAKISRPKK…EVDETDDTQM (214 aa)) lie on the Cytoplasmic side of the membrane. A polyphosphoinositide (PIP2)-binding region spans residues 180–207 (AKISRPKKRAKTITFSKNAVISKRGGKL). 223 to 230 (GSHIYGKL) is a binding site for ATP.

The protein belongs to the inward rectifier-type potassium channel (TC 1.A.2.1) family. KCNJ1 subfamily. As to quaternary structure, interacts with SGK1 and SLC9A3R2/NHERF2. In terms of processing, phosphorylation at Ser-44 by SGK1 is necessary for its expression at the cell membrane. Mainly in kidney (renal cortex, medulla and papilla). As to expression, kidney.

Its subcellular location is the cell membrane. It catalyses the reaction K(+)(in) = K(+)(out). Inhibited by WNK3. Activated by phosphatidylinositol 4,5 biphosphate (PtdIns(4,5)P2). Functionally, inward rectifier potassium channels are characterized by a greater tendency to allow potassium to flow into the cell rather than out of it. Their voltage dependence is regulated by the concentration of extracellular potassium; as external potassium is raised, the voltage range of the channel opening shifts to more positive voltages. The inward rectification is mainly due to the blockage of outward current by internal magnesium. This channel is activated by internal ATP and can be blocked by external barium. In the kidney, probably plays a major role in potassium homeostasis. In terms of biological role, inward rectifier potassium channels are characterized by a greater tendency to allow potassium to flow into the cell rather than out of it. Their voltage dependence is regulated by the concentration of extracellular potassium; as external potassium is raised, the voltage range of the channel opening shifts to more positive voltages. This chain is ATP-sensitive inward rectifier potassium channel 1 (Kcnj1), found in Rattus norvegicus (Rat).